Reading from the N-terminus, the 411-residue chain is 2,3-bisphosphoglycerate-independent phosphoglycerate mutase (411 aa).

It belongs to the BPG-independent phosphoglycerate mutase family. A-PGAM subfamily.

The catalysed reaction is (2R)-2-phosphoglycerate = (2R)-3-phosphoglycerate. Its pathway is carbohydrate degradation; glycolysis; pyruvate from D-glyceraldehyde 3-phosphate: step 3/5. Its function is as follows. Catalyzes the interconversion of 2-phosphoglycerate and 3-phosphoglycerate. The polypeptide is 2,3-bisphosphoglycerate-independent phosphoglycerate mutase (Pyrobaculum aerophilum (strain ATCC 51768 / DSM 7523 / JCM 9630 / CIP 104966 / NBRC 100827 / IM2)).